We begin with the raw amino-acid sequence, 538 residues long: Succinyl-CoA:acetate CoA-transferase (538 aa).

Gly305–Val309 contributes to the CoA binding site. Catalysis depends on Glu330, which acts as the 5-glutamyl coenzyme A thioester intermediate. CoA is bound by residues Asn420 and Gly424.

The protein belongs to the acetyl-CoA hydrolase/transferase family.

It carries out the reaction succinyl-CoA + acetate = succinate + acetyl-CoA. Its function is as follows. Forms succinyl-CoA from succinate and acetyl-CoA. This chain is Succinyl-CoA:acetate CoA-transferase, found in Clostridium kluyveri (strain ATCC 8527 / DSM 555 / NBRC 12016 / NCIMB 10680 / K1).